A 553-amino-acid chain; its full sequence is Putative transport protein YidE (553 aa).

5 helical membrane-spanning segments follow: residues 4–24 (IALT…IGNV), 28–48 (GIGL…HFVS), 65–85 (FGLI…FFAS), 95–115 (LFAV…HKLF), and 158–178 (MSYA…MWML). 2 RCK C-terminal domains span residues 191–276 (QQHE…VIGQ) and 279–361 (DTSL…VLGN). 6 helical membrane passes run 371–391 (MLPV…PVFV), 393–413 (GFPA…ALIL), 439–459 (IVLF…NTLV), 464–484 (LSWI…VGIL), 493–513 (YLTM…LAFA), and 533–553 (LVMF…WSIG).

The protein belongs to the AAE transporter (TC 2.A.81) family. YidE subfamily.

It localises to the cell membrane. This chain is Putative transport protein YidE, found in Shigella boydii serotype 4 (strain Sb227).